Reading from the N-terminus, the 42-residue chain is Fungal defensin eurocin (42 aa).

F2, G3, C4, and H14 together coordinate beta-D-GlcNAc-(1-&gt;4)-Mur2Ac(oyl-L-Ala-gamma-D-Glu-L-Lys-D-Ala-D-Ala)-di-trans,octa-cis-undecaprenyl diphosphate. 3 disulfides stabilise this stretch: C4-C27, C11-C38, and C15-C40. Positions 31 to 35 (WYLGH) are interaction site with membranes lipids. Position 38 (C38) interacts with beta-D-GlcNAc-(1-&gt;4)-Mur2Ac(oyl-L-Ala-gamma-D-Glu-L-Lys-D-Ala-D-Ala)-di-trans,octa-cis-undecaprenyl diphosphate.

Belongs to the invertebrate defensin family.

Its subcellular location is the secreted. The protein resides in the target cell membrane. In terms of biological role, antimicrobial peptide that acts against Gram-positive bacteria but not against Gram-negative bacteria. It selectively inhibits peptidoglycan biosynthesis through complex formation with the cell wall precursor lipid II (1:1 molar ratio) thus inhibiting cell wall synthesis. It does not disrupt cell membranes. In vivo, is effective against an intraperitoneal infection with S.pneumoniae. In vitro, it shows very low hemolytic and cytolytic activities. This is Fungal defensin eurocin from Aspergillus amstelodami.